The primary structure comprises 304 residues: Kazal-type serine protease inhibitor domain-containing protein 1 (304 aa).

The first 30 residues, 1–30, serve as a signal peptide directing secretion; it reads MLPPPRPAAALALPVLLLLLVVLTPPPTGA. In terms of domain architecture, IGFBP N-terminal spans 49 to 129; it reads EGEGCAPCRP…EVPEPLCACR (81 aa). Cystine bridges form between Cys-53-Cys-76, Cys-56-Cys-78, Cys-61-Cys-79, Cys-67-Cys-82, Cys-90-Cys-108, Cys-102-Cys-126, and Cys-135-Cys-168. One can recognise a Kazal-like domain in the interval 120–170; that stretch reads EVPEPLCACRSQSPLCGSDGHTYSQICRLQEAARARPDANLTVAHPGPCES. N-linked (GlcNAc...) asparagine glycans are attached at residues Asn-159 and Asn-183. One can recognise an Ig-like C2-type domain in the interval 172 to 269; sequence PQIVSHPYDT…GQVEAPASLT (98 aa). Cys-193 and Cys-253 are disulfide-bonded. The N-linked (GlcNAc...) asparagine glycan is linked to Asn-277.

It localises to the secreted. It is found in the extracellular space. The protein localises to the extracellular matrix. Functionally, involved in the proliferation of osteoblasts during bone formation and bone regeneration. Promotes matrix assembly. In Homo sapiens (Human), this protein is Kazal-type serine protease inhibitor domain-containing protein 1 (KAZALD1).